A 194-amino-acid chain; its full sequence is Porimin (194 aa).

Residues 1-24 (MALCARAALLLGALQVLALPGAVA) form the signal peptide. Residues 25–151 (QETYAQGSPS…PTKGKGSKFD (127 aa)) lie on the Extracellular side of the membrane. N-linked (GlcNAc...) asparagine glycans are attached at residues asparagine 36, asparagine 47, asparagine 51, asparagine 59, asparagine 76, and asparagine 114. Residues 88 to 124 (KVSTPGVSPHVTPSASKSTPKTSASPNSTQTSASMTT) form a disordered region. Over residues 99–124 (TPSASKSTPKTSASPNSTQTSASMTT) the composition is skewed to low complexity. The chain crosses the membrane as a helical span at residues 152-172 (AGSFVGGIVLTLGVLSILYIG). Residues 173–194 (CKMYYSRRGIRYRSIDEHDAII) lie on the Cytoplasmic side of the membrane. Residue serine 186 is modified to Phosphoserine.

This sequence belongs to the CD164 family.

It is found in the membrane. In terms of biological role, implicated in oncotic cell death, characterized by cell swelling, organelle swelling, vacuolization and increased membrane permeability. The chain is Porimin (Tmem123) from Rattus norvegicus (Rat).